The chain runs to 461 residues: MCWLLLWGILHTCPTQASVLLAQQFPQQLTSPGYPEPYIKGQESHADIEAPEGFAVRLIFQDFDLEPSPGCEGDSVTISTRGTDATRLCGQQGSSLGSPPNQMEFVSSGRSLRLTFRAHSSKNKVTHLHKGFLALYQAAVSQPNGDAEAFTTPGANPPEIQNHCPGPYYKEEQTGTLSCPSSRKWKDRQRGEEVPECVPVCGRPVVPIAENPNTFGSSRAKPGNFPWQAFTSIYGRGGGALLGDRWILTAAHTIFPKDSIYLRKNKTVNVFLGHTDVDELLKLGNHPVRRVVVHPDYRQEESHNFDGDIALLELEHRVPLGPSLLPVCLPDNETLYHSGLWGYISGFGVEMGWLTTKLKYSKLPVAPREACEAWLRQRQRTEVFSDNMFCVGEEMQVNSVCQGDSGSVYVVWDDRALRWVATGIVSWGVGCGKGYGFYTKVLSYVDWIKGVIECKDRCPEA.

An N-terminal signal peptide occupies residues 1–22; sequence MCWLLLWGILHTCPTQASVLLA. The region spanning 23-139 is the CUB domain; the sequence is QQFPQQLTSP…KGFLALYQAA (117 aa). Intrachain disulfides connect C71–C89 and C164–C197. The 62-residue stretch at 138–199 folds into the Sushi domain; that stretch reads AAVSQPNGDA…RGEEVPECVP (62 aa). The region spanning 214 to 453 is the Peptidase S1 domain; the sequence is TFGSSRAKPG…YVDWIKGVIE (240 aa). The active-site Charge relay system is the H252. N-linked (GlcNAc...) asparagine glycosylation occurs at N265. Catalysis depends on D308, which acts as the Charge relay system. N332 carries an N-linked (GlcNAc...) asparagine glycan. 2 disulfide bridges follow: C371-C390 and C401-C431. S405 acts as the Charge relay system in catalysis.

It belongs to the peptidase S1 family.

It localises to the secreted. Its function is as follows. Mediates the proteolytic cleavage of HP/haptoglobin in the endoplasmic reticulum. The protein is Complement C1r subcomponent-like protein (C1rl) of Rattus norvegicus (Rat).